Here is a 216-residue protein sequence, read N- to C-terminus: Large ribosomal subunit protein uL3 (216 aa).

Gln157 carries the post-translational modification N5-methylglutamine.

It belongs to the universal ribosomal protein uL3 family. In terms of assembly, part of the 50S ribosomal subunit. Forms a cluster with proteins L14 and L19. Methylated by PrmB.

Its function is as follows. One of the primary rRNA binding proteins, it binds directly near the 3'-end of the 23S rRNA, where it nucleates assembly of the 50S subunit. This Xanthomonas campestris pv. campestris (strain 8004) protein is Large ribosomal subunit protein uL3.